The following is a 657-amino-acid chain: 1-deoxy-D-xylulose-5-phosphate synthase (657 aa).

Position 73 (H73) interacts with thiamine diphosphate. Residues R91–V110 form a disordered region. Positions D101–V110 are enriched in basic and acidic residues. S113 to A115 lines the thiamine diphosphate pocket. D145 lines the Mg(2+) pocket. Residues G146–A147, N175, Y293, and E375 each bind thiamine diphosphate. N175 is a binding site for Mg(2+).

Belongs to the transketolase family. DXPS subfamily. As to quaternary structure, homodimer. It depends on Mg(2+) as a cofactor. Thiamine diphosphate serves as cofactor.

The enzyme catalyses D-glyceraldehyde 3-phosphate + pyruvate + H(+) = 1-deoxy-D-xylulose 5-phosphate + CO2. It participates in metabolic intermediate biosynthesis; 1-deoxy-D-xylulose 5-phosphate biosynthesis; 1-deoxy-D-xylulose 5-phosphate from D-glyceraldehyde 3-phosphate and pyruvate: step 1/1. In terms of biological role, catalyzes the acyloin condensation reaction between C atoms 2 and 3 of pyruvate and glyceraldehyde 3-phosphate to yield 1-deoxy-D-xylulose-5-phosphate (DXP). The chain is 1-deoxy-D-xylulose-5-phosphate synthase from Arthrobacter sp. (strain FB24).